Here is a 152-residue protein sequence, read N- to C-terminus: AIG2-like protein D (152 aa).

13–18 (YGSLMA) lines the substrate pocket. Glutamate 81 (proton acceptor) is an active-site residue.

It belongs to the gamma-glutamylcyclotransferase family. In terms of tissue distribution, expressed mainly in leaves.

Its function is as follows. Putative gamma-glutamylcyclotransferase. The protein is AIG2-like protein D of Arabidopsis thaliana (Mouse-ear cress).